We begin with the raw amino-acid sequence, 178 residues long: Small ribosomal subunit protein uS4 (178 aa).

In terms of domain architecture, S4 RNA-binding spans 104–166 (RRLQTIVFRK…SNSPMASENH (63 aa)). The segment at 158–178 (NSPMASENHPERTAATSEENQ) is disordered.

The protein belongs to the universal ribosomal protein uS4 family. In terms of assembly, part of the 30S ribosomal subunit. Contacts protein S5. The interaction surface between S4 and S5 is involved in control of translational fidelity.

In terms of biological role, one of the primary rRNA binding proteins, it binds directly to 16S rRNA where it nucleates assembly of the body of the 30S subunit. Its function is as follows. With S5 and S12 plays an important role in translational accuracy. The protein is Small ribosomal subunit protein uS4 of Methanococcus maripaludis (strain DSM 14266 / JCM 13030 / NBRC 101832 / S2 / LL).